Here is a 494-residue protein sequence, read N- to C-terminus: Alpha-amylase-related protein (494 aa).

Positions 1–20 (MIKFALALTLCLAGASLSLA) are cleaved as a signal peptide. Position 21 is a pyrrolidone carboxylic acid (Gln-21). The cysteines at positions 48 and 104 are disulfide-linked. Asn-118, Gln-169, and Asp-178 together coordinate Ca(2+). The cysteines at positions 157 and 171 are disulfide-linked. Arg-206 is a chloride binding site. The active-site Nucleophile is Asp-208. Ca(2+) is bound at residue His-212. Glu-245 (proton donor) is an active-site residue. Chloride-binding residues include Asn-308 and Arg-343. Cystine bridges form between Cys-376–Cys-382, Cys-418–Cys-441, and Cys-448–Cys-460.

This sequence belongs to the glycosyl hydrolase 13 family. In terms of assembly, monomer. Requires Ca(2+) as cofactor. The cofactor is chloride.

It is found in the secreted. It catalyses the reaction Endohydrolysis of (1-&gt;4)-alpha-D-glucosidic linkages in polysaccharides containing three or more (1-&gt;4)-alpha-linked D-glucose units.. The protein is Alpha-amylase-related protein (Amyrel) of Drosophila bocqueti (Fruit fly).